Here is a 282-residue protein sequence, read N- to C-terminus: Phosphatidylserine decarboxylase proenzyme (282 aa).

Residues Asp88, His145, and Ser248 each act as charge relay system; for autoendoproteolytic cleavage activity in the active site. The active-site Schiff-base intermediate with substrate; via pyruvic acid; for decarboxylase activity is Ser248. The residue at position 248 (Ser248) is a Pyruvic acid (Ser); by autocatalysis.

Belongs to the phosphatidylserine decarboxylase family. PSD-B subfamily. Prokaryotic type I sub-subfamily. In terms of assembly, heterodimer of a large membrane-associated beta subunit and a small pyruvoyl-containing alpha subunit. Requires pyruvate as cofactor. In terms of processing, is synthesized initially as an inactive proenzyme. Formation of the active enzyme involves a self-maturation process in which the active site pyruvoyl group is generated from an internal serine residue via an autocatalytic post-translational modification. Two non-identical subunits are generated from the proenzyme in this reaction, and the pyruvate is formed at the N-terminus of the alpha chain, which is derived from the carboxyl end of the proenzyme. The autoendoproteolytic cleavage occurs by a canonical serine protease mechanism, in which the side chain hydroxyl group of the serine supplies its oxygen atom to form the C-terminus of the beta chain, while the remainder of the serine residue undergoes an oxidative deamination to produce ammonia and the pyruvoyl prosthetic group on the alpha chain. During this reaction, the Ser that is part of the protease active site of the proenzyme becomes the pyruvoyl prosthetic group, which constitutes an essential element of the active site of the mature decarboxylase.

The protein localises to the cell membrane. The catalysed reaction is a 1,2-diacyl-sn-glycero-3-phospho-L-serine + H(+) = a 1,2-diacyl-sn-glycero-3-phosphoethanolamine + CO2. The protein operates within phospholipid metabolism; phosphatidylethanolamine biosynthesis; phosphatidylethanolamine from CDP-diacylglycerol: step 2/2. Functionally, catalyzes the formation of phosphatidylethanolamine (PtdEtn) from phosphatidylserine (PtdSer). This chain is Phosphatidylserine decarboxylase proenzyme, found in Dechloromonas aromatica (strain RCB).